Reading from the N-terminus, the 94-residue chain is CRISPR-associated endoribonuclease Cas2 (94 aa).

It belongs to the CRISPR-associated endoribonuclease Cas2 protein family. E.coli-subtype subfamily. In terms of assembly, homodimer. Part of the Cas1-Cas2 complex. Forms a hexamer with 2 Cas1 dimers sandwiching a Cas2 dimer. The DNA lies across a flat surface extending from 1 Cas1 dimer, across the Cas2 dimer and contacting the other Cas1 dimer. Only 1 Cas1 protein from each dimer is catalytic, the other interacts with the Cas2 dimer and possibly target DNA.

Functionally, CRISPR (clustered regularly interspaced short palindromic repeat), is an adaptive immune system that provides protection against mobile genetic elements (viruses, transposable elements and conjugative plasmids). CRISPR clusters contain sequences complementary to antecedent mobile elements and target invading nucleic acids. CRISPR clusters are transcribed and processed into CRISPR RNA (crRNA). The Cas1-Cas2 complex is involved in CRISPR adaptation, the first stage of CRISPR immunity, being required for the addition/removal of CRISPR spacers at the leader end of the CRISPR locus. The Cas1-Cas2 complex introduces staggered nicks into both strands of the CRISPR array near the leader repeat and joins the 5'-ends of the repeat strands with the 3'-ends of the new spacer sequence. Spacer DNA integration requires supercoiled target DNA and 3'-OH ends on the inserted (spacer) DNA and probably initiates with a nucleophilic attack of the C 3'-OH end of the protospacer on the minus strand of the first repeat sequence. Expression of Cas1-Cas2 in a strain lacking both genes permits spacer acquisition. Cas2 not seen to bind DNA alone; the Cas1-Cas2 complex preferentially binds CRISPR-locus DNA. Highest binding is seen to a dual forked DNA complex with 3'-overhangs and a protospacer-adjacent motif-complement specifically positioned. The protospacer DNA lies across a flat surface extending from 1 Cas1 dimer, across the Cas2 dimer and contacting the other Cas1 dimer; the 23 bp-long ds section of the DNA is bracketed by 1 Tyr-22 from each of the Cas1 dimers. Cas1 cuts within the 3'-overhang, to generate a 33-nucleotide DNA that is probably incorporated into the CRISPR leader by a cut-and-paste mechanism. This subunit's probable nuclease activity is not required for spacer acquisition. This is CRISPR-associated endoribonuclease Cas2 (ygbF) from Escherichia coli (strain K12).